The sequence spans 269 residues: uncharacterized protein (269 aa).

This sequence to T.pallidum TP0678.

This is an uncharacterized protein from Borreliella burgdorferi (strain ATCC 35210 / DSM 4680 / CIP 102532 / B31) (Borrelia burgdorferi).